Reading from the N-terminus, the 248-residue chain is Serine/arginine-rich splicing factor 1 (248 aa).

Residue Ser-2 is modified to N-acetylserine. Position 2 is a phosphoserine (Ser-2). The region spanning 16-91 (CRIYVGNLPP…YRLRVEFPRS (76 aa)) is the RRM 1 domain. A Glycyl lysine isopeptide (Lys-Gly) (interchain with G-Cter in SUMO2) cross-link involves residue Lys-30. Lys-38 carries the post-translational modification N6-acetyllysine; alternate. Residue Lys-38 forms a Glycyl lysine isopeptide (Lys-Gly) (interchain with G-Cter in SUMO2); alternate linkage. The tract at residues 88–134 (FPRSGRGTGRGGGGGGGGGAPRGRYGPPSRRSENRVVVSGLPPSGSW) is disordered. Residues Arg-93, Arg-97, and Arg-109 each carry the asymmetric dimethylarginine; alternate modification. Omega-N-methylarginine; alternate occurs at positions 93, 97, and 109. Residues 93 to 108 (RGTGRGGGGGGGGGAP) show a composition bias toward gly residues. Arg-111 carries the post-translational modification Omega-N-methylarginine. In terms of domain architecture, RRM 2 spans 121 to 195 (NRVVVSGLPP…ETAYIRVKVD (75 aa)). Phosphoserine is present on Ser-133. Lys-179 is subject to N6-acetyllysine. The tract at residues 191-248 (RVKVDGPRSPSYGRSRSRSRSRSRSRSRSNSRSRSYSPRRSRGSPRYSPRHSRSRSRT) is disordered. The interval 198-247 (RSPSYGRSRSRSRSRSRSRSRSNSRSRSYSPRRSRGSPRYSPRHSRSRSR) is interaction with SAFB1. 2 positions are modified to phosphoserine: Ser-199 and Ser-201. At Tyr-202 the chain carries Phosphotyrosine. 6 positions are modified to phosphoserine: Ser-205, Ser-207, Ser-209, Ser-231, Ser-234, and Ser-238. The span at 205–248 (SRSRSRSRSRSRSRSNSRSRSYSPRRSRGSPRYSPRHSRSRSRT) shows a compositional bias: basic residues.

Belongs to the splicing factor SR family. In terms of assembly, consists of two polypeptides of p32 and p33. Identified in the spliceosome C complex. Component of a ribonucleoprotein complex containing mRNAs and RNA-binding proteins including DDX5, HNRNPH2 and SRSF1 as well as splicing regulator ARVCF. In vitro, self-associates and binds SRSF2, SNRNP70 and U2AF1 but not U2AF2. Binds SREK1/SFRS12. Interacts with SAFB/SAFB1. Interacts with PSIP1/LEDGF. Interacts with RSRC1 (via Arg/Ser-rich domain). Interacts with ZRSR2/U2AF1-RS2. Interacts with CCDC55 (via C-terminus). Interacts with SRPK1 and a sliding docking interaction is essential for its sequential and processive phosphorylation by SRPK1. Interacts with NXF1. Interacts with CCNL1, CCNL2 and CDK11B. Interacts with RRP1B. Interacts (when phosphorylated in its RS domain) with TNPO3; promoting nuclear import. Interacts with ILDR1 (via C-terminus) and ILDR2. Phosphorylated by CLK1, CLK2, CLK3 and CLK4. Phosphorylated by SRPK1 at multiple serines in its RS domain via a directional (C-terminal to N-terminal) and a dual-track mechanism incorporating both processive phosphorylation (in which the kinase stays attached to the substrate after each round of phosphorylation) and distributive phosphorylation steps (in which the kinase and substrate dissociate after each phosphorylation event). The RS domain of SRSF1 binds to a docking groove in the large lobe of the kinase domain of SRPK1 and this induces certain structural changes in SRPK1 and/or RRM 2 domain of SRSF1, allowing RRM 2 to bind the kinase and initiate phosphorylation. The cycles continue for several phosphorylation steps in a processive manner (steps 1-8) until the last few phosphorylation steps (approximately steps 9-12). During that time, a mechanical stress induces the unfolding of the beta-4 motif in RRM 2, which then docks at the docking groove of SRPK1. This also signals RRM 2 to begin to dissociate, which facilitates SRSF1 dissociation after phosphorylation is completed. In terms of processing, asymmetrically dimethylated at arginines, probably by PRMT1, methylation promotes localization to nuclear speckles.

It is found in the cytoplasm. Its subcellular location is the nucleus speckle. Functionally, plays a role in preventing exon skipping, ensuring the accuracy of splicing and regulating alternative splicing. Interacts with other spliceosomal components, via the RS domains, to form a bridge between the 5'- and 3'-splice site binding components, U1 snRNP and U2AF. Can stimulate binding of U1 snRNP to a 5'-splice site-containing pre-mRNA. Binds to purine-rich RNA sequences, either the octamer, 5'-RGAAGAAC-3' (r=A or G) or the decamers, AGGACAGAGC/AGGACGAAGC. Binds preferentially to the 5'-CGAGGCG-3' motif in vitro. Three copies of the octamer constitute a powerful splicing enhancer in vitro, the ASF/SF2 splicing enhancer (ASE) which can specifically activate ASE-dependent splicing. May function as export adapter involved in mRNA nuclear export through the TAP/NXF1 pathway. The protein is Serine/arginine-rich splicing factor 1 (SRSF1) of Bos taurus (Bovine).